Here is a 75-residue protein sequence, read N- to C-terminus: Small ribosomal subunit protein bS18 (75 aa).

It belongs to the bacterial ribosomal protein bS18 family. Part of the 30S ribosomal subunit. Forms a tight heterodimer with protein bS6.

In terms of biological role, binds as a heterodimer with protein bS6 to the central domain of the 16S rRNA, where it helps stabilize the platform of the 30S subunit. The protein is Small ribosomal subunit protein bS18 of Shewanella frigidimarina (strain NCIMB 400).